Reading from the N-terminus, the 122-residue chain is Large ribosomal subunit protein uL22 (122 aa).

The interval 102–122 (VAEGKEMKSSKSHKKNQAEGK) is disordered.

Belongs to the universal ribosomal protein uL22 family. As to quaternary structure, part of the 50S ribosomal subunit.

Functionally, this protein binds specifically to 23S rRNA; its binding is stimulated by other ribosomal proteins, e.g. L4, L17, and L20. It is important during the early stages of 50S assembly. It makes multiple contacts with different domains of the 23S rRNA in the assembled 50S subunit and ribosome. The globular domain of the protein is located near the polypeptide exit tunnel on the outside of the subunit, while an extended beta-hairpin is found that lines the wall of the exit tunnel in the center of the 70S ribosome. The protein is Large ribosomal subunit protein uL22 of Helicobacter pylori (strain HPAG1).